The chain runs to 591 residues: Probable cyclin-dependent kinase 9 (591 aa).

Residues 1 to 385 (MKRSSSVSVE…FEQTANGKRQ (385 aa)) form an interaction with pch1 region. The 304-residue stretch at 36–339 (YHLMEKLGEG…ASMALEHEYF (304 aa)) folds into the Protein kinase domain. ATP is bound by residues 42–50 (LGEGTFGEV) and lysine 65. The active-site Proton acceptor is aspartate 166. At tyrosine 211 the chain carries Phosphotyrosine. Phosphothreonine is present on threonine 212. Disordered stretches follow at residues 341-534 (TPPY…KTQH) and 549-591 (ARQS…DTPK). A compositionally biased stretch (basic and acidic residues) spans 358–372 (HEYDKRRKREQRDAN). Polar residues-rich tracts occupy residues 404-415 (NYNSQPQYQRGS) and 428-465 (NVNY…TSNH). The tract at residues 442 to 523 (LTSDLPQKNS…NSKVQTTSRA (82 aa)) is binds to pct1. Positions 466–482 (SHADGQRYYRPEQDRSQ) are enriched in basic and acidic residues. The segment covering 491–502 (GRQGRQSSQSQQ) has biased composition (low complexity). Over residues 503 to 534 (PAWNVSSRYQNNSKVQTTSRASENADTNKTQH) the composition is skewed to polar residues. The residue at position 565 (threonine 565) is a Phosphothreonine. Serine 577 is modified (phosphoserine).

This sequence belongs to the protein kinase superfamily. CMGC Ser/Thr protein kinase family. CDC2/CDKX subfamily. As to quaternary structure, interacts with pch1 cyclin via its N-terminal domain. Via its C-terminal domain, interacts with RNA triphosphatase pct1 which is involved in mRNA capping. Also interacts with pcm1.

Its subcellular location is the nucleus. It catalyses the reaction L-seryl-[protein] + ATP = O-phospho-L-seryl-[protein] + ADP + H(+). The enzyme catalyses L-threonyl-[protein] + ATP = O-phospho-L-threonyl-[protein] + ADP + H(+). It carries out the reaction [DNA-directed RNA polymerase] + ATP = phospho-[DNA-directed RNA polymerase] + ADP + H(+). With respect to regulation, may be activated by autophosphorylation or phosphorylation by a separate activating kinase. Its function is as follows. Component of the positive transcription elongation factor b (P-TEFb) which consists of cdk9 and pch1, and which phosphorylates the C-terminal domain (CTD) of RNA polymerase II and spt5. The sequence is that of Probable cyclin-dependent kinase 9 (cdk9) from Schizosaccharomyces pombe (strain 972 / ATCC 24843) (Fission yeast).